The sequence spans 197 residues: MAERKASVERDTLETQIKASINLDGTGKARFNIGVPFLEHMLDQIARHGLIDLDIECKGDLHIDDHHTVEDVGITLGQAFAQAIGDKKGIRRYGHAYVPLDEALSRVVIDFSGRPGLQMHVPYTRATVGGFDVDLFQEFFQGFVNHALVSLHIDNLRGTNTHHQIETVFKAFGRALRMAVELDERMAGQMPSTKGVL.

The protein belongs to the imidazoleglycerol-phosphate dehydratase family.

It is found in the cytoplasm. The catalysed reaction is D-erythro-1-(imidazol-4-yl)glycerol 3-phosphate = 3-(imidazol-4-yl)-2-oxopropyl phosphate + H2O. The protein operates within amino-acid biosynthesis; L-histidine biosynthesis; L-histidine from 5-phospho-alpha-D-ribose 1-diphosphate: step 6/9. This chain is Imidazoleglycerol-phosphate dehydratase, found in Pseudomonas fluorescens (strain Pf0-1).